Reading from the N-terminus, the 132-residue chain is Large ribosomal subunit protein bL17 (132 aa).

This sequence belongs to the bacterial ribosomal protein bL17 family. Part of the 50S ribosomal subunit. Contacts protein L32.

This Shewanella sediminis (strain HAW-EB3) protein is Large ribosomal subunit protein bL17.